A 110-amino-acid polypeptide reads, in one-letter code: Large ribosomal subunit protein uL22 (110 aa).

This sequence belongs to the universal ribosomal protein uL22 family. Part of the 50S ribosomal subunit.

In terms of biological role, this protein binds specifically to 23S rRNA; its binding is stimulated by other ribosomal proteins, e.g. L4, L17, and L20. It is important during the early stages of 50S assembly. It makes multiple contacts with different domains of the 23S rRNA in the assembled 50S subunit and ribosome. The globular domain of the protein is located near the polypeptide exit tunnel on the outside of the subunit, while an extended beta-hairpin is found that lines the wall of the exit tunnel in the center of the 70S ribosome. In Marinomonas sp. (strain MWYL1), this protein is Large ribosomal subunit protein uL22.